The sequence spans 380 residues: Epoxyqueuosine reductase (380 aa).

Residue D139 is the Proton donor of the active site. The region spanning 181-213 (IPFEPDDPLLDSCGDCTICVDRCPTSALVGNGQ) is the 4Fe-4S ferredoxin-type 1 domain. [4Fe-4S] cluster is bound by residues C193, C196, C199, C203, C219, C245, C248, and C252. The 4Fe-4S ferredoxin-type 2 domain maps to 234-263 (YRYKIGNRLYGCDTCQQVCPKNRGINTEQD).

The protein belongs to the QueG family. As to quaternary structure, monomer. It depends on cob(II)alamin as a cofactor. [4Fe-4S] cluster serves as cofactor.

It localises to the cytoplasm. It carries out the reaction epoxyqueuosine(34) in tRNA + AH2 = queuosine(34) in tRNA + A + H2O. Its pathway is tRNA modification; tRNA-queuosine biosynthesis. Catalyzes the conversion of epoxyqueuosine (oQ) to queuosine (Q), which is a hypermodified base found in the wobble positions of tRNA(Asp), tRNA(Asn), tRNA(His) and tRNA(Tyr). In Staphylococcus aureus (strain NCTC 8325 / PS 47), this protein is Epoxyqueuosine reductase.